Consider the following 186-residue polypeptide: Ribosomal RNA small subunit methyltransferase G (186 aa).

S-adenosyl-L-methionine contacts are provided by residues Gly-59, Phe-64, 110–111 (IE), and Arg-124.

This sequence belongs to the methyltransferase superfamily. RNA methyltransferase RsmG family.

The protein localises to the cytoplasm. The enzyme catalyses guanosine(527) in 16S rRNA + S-adenosyl-L-methionine = N(7)-methylguanosine(527) in 16S rRNA + S-adenosyl-L-homocysteine. Its function is as follows. Specifically methylates the N7 position of guanine in position 527 of 16S rRNA. The chain is Ribosomal RNA small subunit methyltransferase G from Campylobacter curvus (strain 525.92).